We begin with the raw amino-acid sequence, 109 residues long: MFGKGGLGNLMKQAQQMQERMQKMQEEIAQLEVTGESGAGLVKVTINGAHNCRRVEIDPSLMEDDKDMLEDLIAAAFNDAARRADELQKEKMASVTAGMPIPPGFKMPF.

The segment at 1–21 (MFGKGGLGNLMKQAQQMQERM) is disordered.

Belongs to the YbaB/EbfC family. In terms of assembly, homodimer.

It localises to the cytoplasm. The protein resides in the nucleoid. Functionally, binds to DNA and alters its conformation. May be involved in regulation of gene expression, nucleoid organization and DNA protection. The polypeptide is Nucleoid-associated protein MS1507 (Mannheimia succiniciproducens (strain KCTC 0769BP / MBEL55E)).